A 179-amino-acid chain; its full sequence is Large ribosomal subunit protein uL5 (179 aa).

The protein belongs to the universal ribosomal protein uL5 family. In terms of assembly, part of the 50S ribosomal subunit; part of the 5S rRNA/L5/L18/L25 subcomplex. Contacts the 5S rRNA and the P site tRNA. Forms a bridge to the 30S subunit in the 70S ribosome.

In terms of biological role, this is one of the proteins that bind and probably mediate the attachment of the 5S RNA into the large ribosomal subunit, where it forms part of the central protuberance. In the 70S ribosome it contacts protein S13 of the 30S subunit (bridge B1b), connecting the 2 subunits; this bridge is implicated in subunit movement. Contacts the P site tRNA; the 5S rRNA and some of its associated proteins might help stabilize positioning of ribosome-bound tRNAs. The protein is Large ribosomal subunit protein uL5 of Alkaliphilus oremlandii (strain OhILAs) (Clostridium oremlandii (strain OhILAs)).